The sequence spans 153 residues: Arachidonate 5-lipoxygenase-activating protein (153 aa).

Topologically, residues 1–8 are lumenal; it reads MDQEAVGN. A helical transmembrane segment spans residues 9 to 30; the sequence is VVLLAIVTLISVVQNGFFAHKV. Over 31-52 the chain is Cytoplasmic; sequence EHESRNQNGRSFQRTGTLAFER. Residues 53–77 form a helical membrane-spanning segment; it reads VYTANQNCVDAYPTFLAVLWTAGLL. Topologically, residues 78–80 are lumenal; that stretch reads CSQ. A helical transmembrane segment spans residues 81-102; sequence VPAAFAGLMYLFVRQKYFVGYL. Topologically, residues 103 to 107 are cytoplasmic; sequence GERTQ. The stretch at 108–115 is an intramembrane region; the sequence is STPGYIFG. A helical transmembrane segment spans residues 116–128; the sequence is KRIILFLFLMSLA. At 129 to 153 the chain is on the lumenal side; the sequence is GILNYCLILLFGSDFENYIKTISTT.

It belongs to the MAPEG family. As to quaternary structure, homotrimer. Interacts with LTC4S and ALOX5.

The protein localises to the nucleus membrane. The protein resides in the endoplasmic reticulum membrane. In terms of biological role, required for leukotriene biosynthesis by ALOX5 (5-lipoxygenase). Anchors ALOX5 to the membrane. Binds arachidonic acid, and could play an essential role in the transfer of arachidonic acid to ALOX5. Binds to MK-886, a compound that blocks the biosynthesis of leukotrienes. The sequence is that of Arachidonate 5-lipoxygenase-activating protein (ALOX5AP) from Oryctolagus cuniculus (Rabbit).